Reading from the N-terminus, the 647-residue chain is DNA mismatch repair protein MutL (647 aa).

The segment at 375 to 395 is disordered; sequence KQEEPQAVKQPPQLWQPPKQE. Low complexity predominate over residues 383–395; that stretch reads KQPPQLWQPPKQE.

This sequence belongs to the DNA mismatch repair MutL/HexB family.

In terms of biological role, this protein is involved in the repair of mismatches in DNA. It is required for dam-dependent methyl-directed DNA mismatch repair. May act as a 'molecular matchmaker', a protein that promotes the formation of a stable complex between two or more DNA-binding proteins in an ATP-dependent manner without itself being part of a final effector complex. This is DNA mismatch repair protein MutL from Bacillus cereus (strain B4264).